The chain runs to 512 residues: D-alanine--D-alanyl carrier protein ligase (512 aa).

152 to 153 (TS) lines the ATP pocket. D199 is a binding site for D-alanine. Position 294 to 299 (294 to 299 (NAYGPT)) interacts with ATP. V303 contributes to the D-alanine binding site. Residues D385, 397 to 400 (YGGR), and K499 contribute to the ATP site. Residue K499 participates in D-alanine binding.

This sequence belongs to the ATP-dependent AMP-binding enzyme family. DltA subfamily.

The protein resides in the cytoplasm. It carries out the reaction holo-[D-alanyl-carrier protein] + D-alanine + ATP = D-alanyl-[D-alanyl-carrier protein] + AMP + diphosphate. It functions in the pathway cell wall biogenesis; lipoteichoic acid biosynthesis. Functionally, catalyzes the first step in the D-alanylation of lipoteichoic acid (LTA), the activation of D-alanine and its transfer onto the D-alanyl carrier protein (Dcp) DltC. In an ATP-dependent two-step reaction, forms a high energy D-alanyl-AMP intermediate, followed by transfer of the D-alanyl residue as a thiol ester to the phosphopantheinyl prosthetic group of the Dcp. D-alanylation of LTA plays an important role in modulating the properties of the cell wall in Gram-positive bacteria, influencing the net charge of the cell wall. This is D-alanine--D-alanyl carrier protein ligase from Streptococcus pyogenes serotype M4 (strain MGAS10750).